Here is a 1417-residue protein sequence, read N- to C-terminus: MNNGILHQNYNSKKFDIIKISLASPEVIRSWSHGEVKKPETINYRTFKPERDGLFCAKIFGPIKDYECLCGKYKRLKHRGVVCERCGVEVEQAKVRRERMGHIDLVCPVVHIWYLKSLPSRIGLFLDMPLKNVEKVLYFESYIVTDPGMTPLEKKQLLTDEEYAEALENYGYEFEASMGAEAIRDLLADTDIESEIELLQAECEESKSTAKKEKAIKRLRLLETFQASGNKPEWMVMTVLPVLPPDLRPLVPIEGGRFATSDLNDLYRRVINRNNRLKKLLDLNAPDIIVRNEKRMLQEAVDALLDNGRRGRAVTGSNKRPLKSLADMIKGKQGRFRQNLLGKRVDYSGRSVITVGPSLRLHECGLPKKMALELFKPFVYSKLRLGGHATTIKQAKRMVELEEAVVWDILETVINEHPVLLNRAPTLHRLGIQAFEPRLIEGKAIQLHPLVCAAFNADFDGDQMAVHVPLTVESQLEARVLMMSTNNILSPASGQPIITPTQDIVLGLYYITREKEGARGEGKLFSSYEDVSRAYNSGTIDIHAKIKLRIDRQVFDTKGNTYNEKGVVNTTVGRALLLNILPEGLSFSLLNKVLVKKEISKIINQAFRVLGGKATVVLADKLMYAGFKYSTLSGVSVGVDDMTIPDNKEAKIEEAEKEIKQITEQYQSSLITENERYNNIINIWSKTSDEVGASMMDAISKDTVSINGEKKEIESFNSVYMMAKSGARGSYNQMRQLAGMRGLMAKPDGTMIETAITANFREGLSVLQYFTSTHGARKGLADTALKTANAGYLTRRLVDVAQDLVVIEEDCGTDDGLMFSAIVEDGEVKVPLVERALGRTLAADVVTEKGVVLLEAGTLLDENLVELLDDNGIDMIKVRSPITCKTRRGLCAKCYGRDLARERQVNVGESVGVIAAQSIGEPGTQLTMRTFHTGGAASLGITVSDIKVKTAGKIKFKNIRTVTNKEGQEIVISRAGEIIVSDTMGRVREQHKIPMGAVVPLASGKAVEIGDVIATWDPHAQPLITDVAGKVVLEDVIDGITSKHTYDDLTGQQTIEITSISQRTTSKNLKPVVKIVDEKGAELKSIPLAVGAVLNVADDSILEVGDIVAKIPLEGSKNKDITGGLPRVAELFEARRPKDAAILSPCDGMVRLGNRDTKEKQRIEIIDKNGHIVEEILLPKSRHLVVFDGEQVSRGDVLADGPTDPHDLLKYKGLEEFADYILIEAQSVYRMQGVVINDKHIETIVRQMLRKAVILDEGDSKFVKDESIELVRILEENDKLRKQGKKEVEYELVLMGITRSSLSTESFLSAASFQETTRVLTEASINSQIDNLRGLKENVLIGRLIPAGTGLAVRKESAKIEKMREELGVEDNMVFTDLSSFNPEEISFDSIQSQKEDKDINEDIEESLRNALESLDF.

Zn(2+) is bound by residues Cys-68, Cys-70, Cys-83, and Cys-86. Positions 458, 460, and 462 each coordinate Mg(2+). Residues Cys-811, Cys-884, Cys-891, and Cys-894 each coordinate Zn(2+).

This sequence belongs to the RNA polymerase beta' chain family. In terms of assembly, the RNAP catalytic core consists of 2 alpha, 1 beta, 1 beta' and 1 omega subunit. When a sigma factor is associated with the core the holoenzyme is formed, which can initiate transcription. The cofactor is Mg(2+). Zn(2+) is required as a cofactor.

It carries out the reaction RNA(n) + a ribonucleoside 5'-triphosphate = RNA(n+1) + diphosphate. Functionally, DNA-dependent RNA polymerase catalyzes the transcription of DNA into RNA using the four ribonucleoside triphosphates as substrates. The chain is DNA-directed RNA polymerase subunit beta' from Francisella tularensis subsp. holarctica (strain OSU18).